The sequence spans 207 residues: MFIVIEGCEGSGKSSLTELLKDRLIAEGKAVVATREPGGSPLGERVRDLILEPSTPSISPYTELFLFLAARAEHITKKIFPALESGNIVICDRFHDSTIVYQGIAEGLGKEYVTSLCHHVVGEKKFLPDLTCLLDIPADEGLRRKQQQKSLDKFEDKPLAYHTKIREGFLSLAEAHPNSYLILDGRQPLEESLNKVMTAYTELALCK.

7 to 14 (GCEGSGKS) is an ATP binding site.

The protein belongs to the thymidylate kinase family.

It catalyses the reaction dTMP + ATP = dTDP + ADP. Functionally, phosphorylation of dTMP to form dTDP in both de novo and salvage pathways of dTTP synthesis. This is Thymidylate kinase from Chlamydia caviae (strain ATCC VR-813 / DSM 19441 / 03DC25 / GPIC) (Chlamydophila caviae).